The following is a 317-amino-acid chain: Transaldolase (317 aa).

The active-site Schiff-base intermediate with substrate is Lys-125.

The protein belongs to the transaldolase family. Type 1 subfamily. As to quaternary structure, homodimer.

It localises to the cytoplasm. It carries out the reaction D-sedoheptulose 7-phosphate + D-glyceraldehyde 3-phosphate = D-erythrose 4-phosphate + beta-D-fructose 6-phosphate. The protein operates within carbohydrate degradation; pentose phosphate pathway; D-glyceraldehyde 3-phosphate and beta-D-fructose 6-phosphate from D-ribose 5-phosphate and D-xylulose 5-phosphate (non-oxidative stage): step 2/3. Functionally, transaldolase is important for the balance of metabolites in the pentose-phosphate pathway. The sequence is that of Transaldolase from Delftia acidovorans (strain DSM 14801 / SPH-1).